The chain runs to 793 residues: MAAGRPVRGPELAPRRLLQLLLLVLLGGPGRGAALSGNVTGPGPHSASGSSRRDVPVTSPPPPLLSHCGRAAHCEPLRYNVCLGSALPYGATTTLLAGDSDSQEEAHGKLVLWSGLRNAPRCWAVIQPLLCAVYMPKCENDRVELPSRTLCQATRGPCAIVERERGWPDFLRCTPDHFPEGCPNEVQNIKFNSSGQCEAPLVRTDNPKSWYEDVEGCGIQCQNPLFTEAEHQDMHSYIAAFGAVTGLCTLFTLATFVADWRNSNRYPAVILFYVNACFFVGSIGWLAQFMDGARREIVCRADGTMRFGEPTSSETLSCVIIFVIVYYALMAGVVWFVVLTYAWHTSFKALGTTYQPLSGKTSYFHLLTWSLPFVLTVAILAVAQVDGDSVSGICFVGYKNYRYRAGFVLAPIGLVLIVGGYFLIRGVMTLFSIKSNHPGLLSEKAASKINETMLRLGIFGFLAFGFVLITFSCHFYDFFNQAEWERSFRDYVLCQANVTIGLPTKKPIPDCEIKNRPSLLVEKINLFAMFGTGIAMSTWVWTKATLLIWRRTWCRLTGHSDDEPKRIKKSKMIAKAFSKRRELLQNPGQELSFSMHTVSHDGPVAGLAFDLNEPSADVSSAWAQHVTKMVARRGAILPQDVSVTPVATPVPPEEQANMWLVEAEISPELEKRLGRKKKRRKRKKEVCPLRPAPELHHSAPVPATSAVPRLPQLPRQKCLVAANAWGTGESCRQGAWTLVSNPFCPEPSPHQDPFLPGASAPRVWAQGRLQGLGSIHSRTNLMEAEILDADSDF.

Positions methionine 1–glycine 32 are cleaved as a signal peptide. Over alanine 33–tyrosine 237 the chain is Extracellular. The interval leucine 35 to proline 61 is disordered. Asparagine 38 is a glycosylation site (N-linked (GlcNAc...) asparagine). Disulfide bonds link cysteine 68–cysteine 182, cysteine 74–cysteine 138, cysteine 82–cysteine 131, cysteine 122–cysteine 158, and cysteine 151–cysteine 173. The region spanning glycine 69–glutamate 185 is the FZ domain. Aspartate 99 contacts cholesterol. The N-linked (GlcNAc...) asparagine glycan is linked to asparagine 192. 3 disulfides stabilise this stretch: cysteine 197–cysteine 217, cysteine 221–cysteine 299, and cysteine 318–cysteine 394. Residues isoleucine 238–alanine 258 form a helical membrane-spanning segment. Residues aspartate 259–arginine 265 lie on the Cytoplasmic side of the membrane. The chain crosses the membrane as a helical span at residues tyrosine 266–leucine 286. Topologically, residues alanine 287–cysteine 318 are extracellular. The helical transmembrane segment at valine 319–leucine 339 threads the bilayer. The Cytoplasmic segment spans residues threonine 340 to serine 362. A helical transmembrane segment spans residues tyrosine 363–alanine 383. The Extracellular segment spans residues glutamine 384–glycine 406. Residue tyrosine 398 coordinates cholesterol. A helical transmembrane segment spans residues phenylalanine 407 to valine 427. At methionine 428–arginine 455 the chain is on the cytoplasmic side. The helical transmembrane segment at leucine 456–tyrosine 476 threads the bilayer. At aspartate 477–alanine 528 the chain is on the extracellular side. Cysteines 494 and 511 form a disulfide. Asparagine 497 is a glycosylation site (N-linked (GlcNAc...) asparagine). The chain crosses the membrane as a helical span at residues methionine 529–tryptophan 549. Residues threonine 542–isoleucine 573 form an interaction with BBS5 and BBS7 region. The Cytoplasmic portion of the chain corresponds to arginine 550 to phenylalanine 793. 3 positions are modified to phosphoserine: serine 560, serine 578, and serine 594. Residues alanine 574–asparagine 657 form a required for interaction with PRKACA region. Positions glutamine 585–threonine 597 are interaction with DLG5. Phosphothreonine is present on threonine 597. Residues serine 599 and serine 642 each carry the phosphoserine modification. Residues threonine 644 and threonine 648 each carry the phosphothreonine modification. Serine 666 carries the post-translational modification Phosphoserine. A compositionally biased stretch (basic residues) spans glycine 674–lysine 684. Residues glycine 674–alanine 703 form a disordered region.

This sequence belongs to the G-protein coupled receptor Fz/Smo family. As to quaternary structure, homodimer. Interacts (via C-terminus) with protein kinase A catalytic subunit PRKACA; interacts with free PRKACA subunits and the interaction leads to sequestration of PRKACA at the membrane, preventing PRKACA-mediated phosphorylation of GLI transcription factors. Interacts with ARRB2. Interacts with BBS5 and BBS7; the interactions are indicative for the association of SMO with the BBsome complex to facilitate ciliary localization of SMO. Interacts with KIF7, DLG5 and SDCBP. Interacts with GAS8/DRC4. Post-translationally, phosphorylation by GRK kinases is required for interaction with protein kinase A catalytic subunit PRKACA. As to expression, during early somite stages of embryonic development, modestly up-regulated in the cells of the node (at protein level).

Its subcellular location is the cell membrane. The protein localises to the cell projection. It localises to the cilium. G protein-coupled receptor which associates with the patched protein (PTCH) to transduce hedgehog protein signaling. Binding of sonic hedgehog (SHH) to its receptor patched prevents inhibition of smoothened (SMO) by patched. When active, SMO binds to and sequesters protein kinase A catalytic subunit PRKACA at the cell membrane, preventing PRKACA-mediated phosphorylation of GLI transcription factors which releases the GLI proteins from PRKACA-mediated inhibition and allows for transcriptional activation of hedgehog pathway target genes. Required for the accumulation of KIF7, GLI2 and GLI3 in the cilia. Interacts with DLG5 at the ciliary base to induce the accumulation of KIF7 and GLI2 at the ciliary tip for GLI2 activation. This chain is Protein smoothened (Smo), found in Mus musculus (Mouse).